The chain runs to 4834 residues: E3 ubiquitin-protein ligase HERC2 (4834 aa).

The interval 50 to 88 is disordered; sequence TESTQNGELPPRKDDSVEPSGTKKEDLNDKEKKDEEETP. Residues 59-84 show a composition bias toward basic and acidic residues; it reads PPRKDDSVEPSGTKKEDLNDKEKKDE. Threonine 272 bears the Phosphothreonine mark. An RCC1 1-1 repeat occupies 415–461; it reads PTSHKGSLQEVIGWGLIGWKYYANVIGPIQCEGLANLGVTQIACAEK. The RCC1 1-2 repeat unit spans residues 462–512; sequence RFLILSRNGRVYTQAYNSDTLAPQLVQGLASRNIVKIAAHSDGHHYLALAA. An RCC1 1-3 repeat occupies 513 to 568; sequence TGEVYSWGCGDGGRLGHGDTVPLEEPKVISAFSGKQAGKHVVHIACGSTYSAAITA. An RCC1 1-4 repeat occupies 569–620; the sequence is EGELYTWGRGNYGRLGHGSSEDEAIPMLVAGLKGLKVIDVACGSGDAQTLAV. One copy of the RCC1 1-5 repeat lies at 623-674; that stretch reads NGQVWSWGDGDYGKLGRGGSDGCKTPKLIEKLQDLDVVKVRCGSQFSIALTK. Threonine 647 bears the Phosphothreonine mark. An RCC1 1-6 repeat occupies 675 to 726; it reads DGQVYSWGKGDNQRLGHGTEEHVRYPKLLEGLQGKKVIDVAAGSTHCLALTE. The RCC1 1-7 repeat unit spans residues 728–778; the sequence is SEVHSWGSNDQCQHFDTLRVTKPEPAALPGLDTKHIVGIACGPAQSFAWSS. Residues 948–980 are a coiled coil; the sequence is LHAAITAEIQDIEAKKEAQKEKEIDEQEANAST. The region spanning 1207 to 1283 is the Cytochrome b5 heme-binding domain; sequence VTLIRKADLE…MHAFCVGQYL (77 aa). The interval 1555–1575 is disordered; the sequence is RKKRVPKKPESTDDEEKIGNE. A compositionally biased stretch (acidic residues) spans 1566–1575; the sequence is TDDEEKIGNE. Serine 1577 bears the Phosphoserine mark. Positions 1859–1932 constitute an MIB/HERC2 domain; that stretch reads SGPELAAMMK…KYDLKLAELP (74 aa). The tract at residues 1933–1958 is disordered; sequence AAAQPSAEDSDTEDDSEAEQTERNIH. The segment covering 1940–1951 has biased composition (acidic residues); sequence EDSDTEDDSEAE. Serine 1942 carries the post-translational modification Phosphoserine. Threonine 1944 carries the post-translational modification Phosphothreonine. Residue serine 2454 is modified to Phosphoserine. The CPH domain maps to 2554-2630; sequence RADFLSNDDY…RYIHVELIGY (77 aa). The segment at 2703 to 2755 adopts a ZZ-type zinc-finger fold; it reads HPGVTCDGCQMFPINGSRFKCRNCDDFDFCETCFKTKKHNTRHTFGRINEPGQ. Residues cysteine 2708, cysteine 2711, cysteine 2723, cysteine 2726, cysteine 2732, cysteine 2735, histidine 2741, and histidine 2745 each coordinate Zn(2+). Positions 2759-2936 constitute a DOC domain; the sequence is FCGRSGKQLK…ASDNEEEEDE (178 aa). Serine 2928 carries the phosphoserine modification. The RCC1 2-1 repeat unit spans residues 2958–3009; sequence RTKVFVWGLNDKDQLGGLKGSKIKVPSFSETLSALNVVQVAGGSKSLFAVTV. An RCC1 2-2 repeat occupies 3010 to 3064; it reads EGKVYACGEATNGRLGLGISSGTVPIPRQITALSSYVVKKVAVHSGGRHATALTV. An RCC1 2-3 repeat occupies 3065-3116; sequence DGKVFSWGEGDDGKLGHFSRMNCDKPRLIEALKTKRIRDIACGSSHSAALTS. One copy of the RCC1 2-4 repeat lies at 3118–3168; it reads GELYTWGLGEYGRLGHGDNTTQLKPKMVKVLLGHRVIQVACGSRDAQTLAL. The stretch at 3171–3222 is one RCC1 2-5 repeat; it reads EGLVFSWGDGDFGKLGRGGSEGCNIPQNIERLNGQGVCQIECGAQFSLALTK. The stretch at 3224 to 3274 is one RCC1 2-6 repeat; the sequence is GVVWTWGKGDYFRLGHGSDVHVRKPQVVEGLRGKKIVHVAVGALHCLAVTD. Residues 3275–3326 form an RCC1 2-7 repeat; sequence SGQVYAWGDNDHGQQGNGTTTVNRKPTLVQGLEGQKITRVACGSSHSVAWTT. 2 stretches are compositionally biased toward polar residues: residues 3602–3611 and 3618–3629; these read SQSGRLSSQP and HPYTDDTSTSGT. The interval 3602 to 3629 is disordered; sequence SQSGRLSSQPVVVESSHPYTDDTSTSGT. Residues 3951 to 4002 form an RCC1 3-1 repeat; sequence SGTIYGWGHNHRGQLGGIEGAKVKVPTPCEALATLRPVQLIGGEQTLFAVTA. Residues 4004 to 4056 form an RCC1 3-2 repeat; sequence GKLYATGYGAGGRLGIGGTESVSTPTLLESIQHVFIKKVAVNSGGKHCLALSS. The RCC1 3-3 repeat unit spans residues 4058–4108; the sequence is GEVYSWGEAEDGKLGHGNRSPCDRPRVIESLRGIEVVDVAAGGAHSACVTA. An RCC1 3-4 repeat occupies 4110 to 4162; it reads GDLYTWGKGRYGRLGHSDSEDQLKPKLVEALQGHRVVDIACGSGDAQTLCLTD. The RCC1 3-5 repeat unit spans residues 4164 to 4214; it reads DTVWSWGDGDYGKLGRGGSDGCKVPMKIDSLTGLGVVKVECGSQFSVALTK. One copy of the RCC1 3-6 repeat lies at 4216–4266; that stretch reads GAVYTWGKGDYHRLGHGSDDHVRRPRQVQGLQGKKVIAIATGSLHCVCCTE. One copy of the RCC1 3-7 repeat lies at 4268-4318; it reads GEVYTWGDNDEGQLGDGTTNAIQRPRLVAALQGKKVNRVACGSAHTLAWST. An HECT domain is found at 4457-4794; it reads DSLLLPHRVW…IHFCKSIDTD (338 aa). Cysteine 4762 acts as the Glycyl thioester intermediate in catalysis. Residues 4804–4834 are disordered; that stretch reads EPAADDSSDDSDNEDVDSFASDSTQDYLTGH. Residues 4806–4820 show a composition bias toward acidic residues; that stretch reads AADDSSDDSDNEDVD. Serine 4810, serine 4811, and serine 4814 each carry phosphoserine. Positions 4823-4834 are enriched in polar residues; the sequence is ASDSTQDYLTGH. Position 4827 is a phosphothreonine (threonine 4827).

As to quaternary structure, interacts (when phosphorylated at Thr-4827 and sumoylated) with RNF8 (via FHA domain); this interaction increases after ionizing radiation (IR) treatment. Interacts with XPA. Interacts with NEURL4. Via its interaction with NEURL4, may indirectly interact with CCP110 and CEP97. Post-translationally, phosphorylation at Thr-4827 is required for interaction with RNF8. In terms of processing, sumoylated with SUMO1 by PIAS4 in response to double-strand breaks (DSBs), promoting the interaction with RNF8.

Its subcellular location is the cytoplasm. It is found in the cytoskeleton. The protein resides in the microtubule organizing center. It localises to the centrosome. The protein localises to the centriole. Its subcellular location is the nucleus. It carries out the reaction S-ubiquitinyl-[E2 ubiquitin-conjugating enzyme]-L-cysteine + [acceptor protein]-L-lysine = [E2 ubiquitin-conjugating enzyme]-L-cysteine + N(6)-ubiquitinyl-[acceptor protein]-L-lysine.. Its pathway is protein modification; protein ubiquitination. Its function is as follows. E3 ubiquitin-protein ligase that regulates ubiquitin-dependent retention of repair proteins on damaged chromosomes. Recruited to sites of DNA damage in response to ionizing radiation (IR) and facilitates the assembly of UBE2N and RNF8 promoting DNA damage-induced formation of 'Lys-63'-linked ubiquitin chains. Acts as a mediator of binding specificity between UBE2N and RNF8. Involved in the maintenance of RNF168 levels. E3 ubiquitin-protein ligase that promotes the ubiquitination and proteasomal degradation of XPA which influences the circadian oscillation of DNA excision repair activity. By controlling the steady-state expression of the IGF1R receptor, indirectly regulates the insulin-like growth factor receptor signaling pathway. Also modulates iron metabolism by regulating the basal turnover of FBXL5. This chain is E3 ubiquitin-protein ligase HERC2, found in Homo sapiens (Human).